Consider the following 440-residue polypeptide: DNA polymerase delta small subunit (440 aa).

This sequence belongs to the DNA polymerase delta/II small subunit family. In terms of assembly, heterodimer with subunits of 125 kDa and 50 kDa.

It is found in the nucleus. It carries out the reaction DNA(n) + a 2'-deoxyribonucleoside 5'-triphosphate = DNA(n+1) + diphosphate. The function of the small subunit is not yet clear. This chain is DNA polymerase delta small subunit (POLD2), found in Arabidopsis thaliana (Mouse-ear cress).